The primary structure comprises 432 residues: Enolase (432 aa).

Position 167 (Gln167) interacts with (2R)-2-phosphoglycerate. The Proton donor role is filled by Glu209. Asp246, Glu290, and Asp317 together coordinate Mg(2+). Residues Lys342, Arg371, Ser372, and Lys393 each contribute to the (2R)-2-phosphoglycerate site. The active-site Proton acceptor is the Lys342.

This sequence belongs to the enolase family. Component of the RNA degradosome, a multiprotein complex involved in RNA processing and mRNA degradation. It depends on Mg(2+) as a cofactor.

The protein localises to the cytoplasm. It localises to the secreted. The protein resides in the cell surface. The catalysed reaction is (2R)-2-phosphoglycerate = phosphoenolpyruvate + H2O. The protein operates within carbohydrate degradation; glycolysis; pyruvate from D-glyceraldehyde 3-phosphate: step 4/5. Its function is as follows. Catalyzes the reversible conversion of 2-phosphoglycerate (2-PG) into phosphoenolpyruvate (PEP). It is essential for the degradation of carbohydrates via glycolysis. In Klebsiella pneumoniae (strain 342), this protein is Enolase.